A 305-amino-acid polypeptide reads, in one-letter code: Protoheme IX farnesyltransferase 2 (305 aa).

8 consecutive transmembrane segments (helical) span residues leucine 38–glycine 58, isoleucine 60–isoleucine 80, isoleucine 115–isoleucine 135, isoleucine 157–valine 177, isoleucine 181–leucine 201, valine 227–glycine 247, leucine 249–leucine 269, and phenylalanine 285–phenylalanine 305.

It belongs to the UbiA prenyltransferase family. Protoheme IX farnesyltransferase subfamily. Interacts with CtaA.

It is found in the cell membrane. It carries out the reaction heme b + (2E,6E)-farnesyl diphosphate + H2O = Fe(II)-heme o + diphosphate. The protein operates within porphyrin-containing compound metabolism; heme O biosynthesis; heme O from protoheme: step 1/1. In terms of biological role, converts heme B (protoheme IX) to heme O by substitution of the vinyl group on carbon 2 of heme B porphyrin ring with a hydroxyethyl farnesyl side group. In Bacillus subtilis (strain 168), this protein is Protoheme IX farnesyltransferase 2 (ctaB2).